The chain runs to 1042 residues: FHIP family protein AAEL005291 (1042 aa).

Positions 1–14 (MSWLRSSPLRQSFS) are enriched in polar residues. 4 disordered regions span residues 1–31 (MSWL…GGNS), 494–514 (NNTS…PQGG), 821–866 (PHSG…KRND), and 905–977 (SNSS…GSPH). Positions 839–859 (VSMTSNLSQTTPMQLTPSSSY) are enriched in polar residues. Composition is skewed to low complexity over residues 905–940 (SNSS…FMGS) and 956–976 (PSIG…TGSP).

It belongs to the FHIP family.

The polypeptide is FHIP family protein AAEL005291 (Aedes aegypti (Yellowfever mosquito)).